A 130-amino-acid chain; its full sequence is MGLLLILVGIGGGLGAMSRFALTQATASISKQIPIGILLCNIIGSLIIGMMAAFLIQTKLFNEDISTYVRSLFVTGFLGGFTTFSSFSLDILNLLQRGEALLAISYILVSVIVSLIAVILGFYFIMGIYR.

4 helical membrane-spanning segments follow: residues 2 to 22 (GLLL…RFAL), 35 to 55 (IGIL…AAFL), 72 to 92 (LFVT…LDIL), and 107 to 127 (ILVS…FIMG). Gly-79 and Thr-82 together coordinate Na(+).

This sequence belongs to the fluoride channel Fluc/FEX (TC 1.A.43) family.

Its subcellular location is the cell inner membrane. It catalyses the reaction fluoride(in) = fluoride(out). With respect to regulation, na(+) is not transported, but it plays an essential structural role and its presence is essential for fluoride channel function. In terms of biological role, fluoride-specific ion channel. Important for reducing fluoride concentration in the cell, thus reducing its toxicity. The protein is Fluoride-specific ion channel FluC of Francisella philomiragia subsp. philomiragia (strain ATCC 25017 / CCUG 19701 / FSC 153 / O#319-036).